A 733-amino-acid polypeptide reads, in one-letter code: 2'-5'-oligoadenylate synthase 2 (733 aa).

The N-myristoyl glycine moiety is linked to residue glycine 2. 2 OAS domain regions span residues 47–365 and 373–713; these read VPSQ…CWDV and TPSH…WKVP. Residue lysine 408 is modified to N6-acetyllysine. Serine 427 lines the ATP pocket. The Mg(2+) site is built by aspartate 439, aspartate 441, and aspartate 510. Residues arginine 574 and lysine 577 each contribute to the ATP site.

This sequence belongs to the 2-5A synthase family. Homodimer. Requires Mg(2+) as cofactor. Myristoylation is not essential for its activity. In terms of processing, glycosylated. Glycosylation is essential for its activity.

Its subcellular location is the cytoplasm. The protein resides in the perinuclear region. The enzyme catalyses 3 ATP = 5'-triphosphoadenylyl-(2'-&gt;5')-adenylyl-(2'-&gt;5')-adenosine + 2 diphosphate. Produced as a latent enzyme which is activated by double stranded RNA (dsRNA) generated during the course of viral infection. The dsRNA activator must be at least 15 nucleotides long, and no modification of the 2'-hydroxyl group is tolerated. ssRNA or dsDNA do not act as activators. Strongly inhibited by copper, iron and zinc ions. Partially inhibited by cobalt and nickel ions. Its function is as follows. Interferon-induced, dsRNA-activated antiviral enzyme which plays a critical role in cellular innate antiviral response. Activated by detection of double stranded RNA (dsRNA): polymerizes higher oligomers of 2'-5'-oligoadenylates (2-5A) from ATP which then bind to the inactive monomeric form of ribonuclease L (RNASEL) leading to its dimerization and subsequent activation. Activation of RNASEL leads to degradation of cellular as well as viral RNA, resulting in the inhibition of protein synthesis, thus terminating viral replication. Can mediate the antiviral effect via the classical RNASEL-dependent pathway or an alternative antiviral pathway independent of RNASEL. In addition, it may also play a role in other cellular processes such as apoptosis, cell growth, differentiation and gene regulation. May act as a negative regulator of lactation, stopping lactation in virally infected mammary gland lobules, thereby preventing transmission of viruses to neonates. Non-infected lobules would not be affected, allowing efficient pup feeding during infection. The polypeptide is 2'-5'-oligoadenylate synthase 2 (Oas2) (Rattus norvegicus (Rat)).